A 104-amino-acid polypeptide reads, in one-letter code: Large ribosomal subunit protein bL21 (104 aa).

It belongs to the bacterial ribosomal protein bL21 family. As to quaternary structure, part of the 50S ribosomal subunit. Contacts protein L20.

This protein binds to 23S rRNA in the presence of protein L20. This chain is Large ribosomal subunit protein bL21, found in Streptococcus thermophilus (strain ATCC BAA-491 / LMD-9).